Reading from the N-terminus, the 547-residue chain is CTP synthase (547 aa).

The segment at 1-269 is amidoligase domain; the sequence is MKTKFIFVTG…DQKVAIMLRL (269 aa). Ser14 serves as a coordination point for CTP. UTP is bound at residue Ser14. ATP contacts are provided by residues 15–20 and Asp72; that span reads SLGKGL. Mg(2+) is bound by residues Asp72 and Glu143. Residues 150–152, 190–195, and Lys226 each bind CTP; these read DIE and KTKPTQ. UTP-binding positions include 190–195 and Lys226; that span reads KTKPTQ. Positions 294 to 547 constitute a Glutamine amidotransferase type-1 domain; sequence TVAIVGKYVD…IGAAKKHAKV (254 aa). Gly356 contributes to the L-glutamine binding site. The active-site Nucleophile; for glutamine hydrolysis is Cys383. L-glutamine-binding positions include 384–387, Glu407, and Arg475; that span reads LGMQ. Catalysis depends on residues His520 and Glu522.

This sequence belongs to the CTP synthase family. In terms of assembly, homotetramer.

It catalyses the reaction UTP + L-glutamine + ATP + H2O = CTP + L-glutamate + ADP + phosphate + 2 H(+). The enzyme catalyses L-glutamine + H2O = L-glutamate + NH4(+). It carries out the reaction UTP + NH4(+) + ATP = CTP + ADP + phosphate + 2 H(+). Its pathway is pyrimidine metabolism; CTP biosynthesis via de novo pathway; CTP from UDP: step 2/2. Allosterically activated by GTP, when glutamine is the substrate; GTP has no effect on the reaction when ammonia is the substrate. The allosteric effector GTP functions by stabilizing the protein conformation that binds the tetrahedral intermediate(s) formed during glutamine hydrolysis. Inhibited by the product CTP, via allosteric rather than competitive inhibition. Catalyzes the ATP-dependent amination of UTP to CTP with either L-glutamine or ammonia as the source of nitrogen. Regulates intracellular CTP levels through interactions with the four ribonucleotide triphosphates. This is CTP synthase from Desulfovibrio desulfuricans (strain ATCC 27774 / DSM 6949 / MB).